Here is a 609-residue protein sequence, read N- to C-terminus: CTTNBP2 N-terminal-like protein (609 aa).

Residues 1 to 10 are compositionally biased toward polar residues; the sequence is MEQNSNSSVA. A disordered region spans residues 1–29; that stretch reads MEQNSNSSVADTFAEAPATDADYGTENCS. 2 coiled-coil regions span residues 182-264 and 303-370; these read RMVN…QKQI and IAEG…QQLG. A disordered region spans residues 556–584; that stretch reads PPAGARGAPPPIPTKPIVPPKREPSLSRL. The span at 563-574 shows a compositional bias: pro residues; the sequence is APPPIPTKPIVP. A Phosphoserine modification is found at Ser-586.

The protein resides in the cell projection. It is found in the lamellipodium. Its subcellular location is the cytoplasm. The protein localises to the cytoskeleton. It localises to the stress fiber. Functionally, regulates lamellipodial actin dynamics in a Cortactin-dependent manner and is therefore likely involved in controlling actin branch density, actin-retrograde flow rates and lamellipodial protrusion. Functions by slowing the dissociation of Cortactin from Arp2/3 nucleated branches thereby increasing branch nucleation and junction stability. Associates with core striatin-interacting phosphatase and kinase (STRIPAK) complex to form CTTNBP2NL-STRIPAK complexes. STRIPAK complexes have critical roles in protein (de)phosphorylation and are regulators of multiple signaling pathways including Hippo, MAPK, nuclear receptor and cytoskeleton remodeling. Different types of STRIPAK complexes are involved in a variety of biological processes such as cell growth, differentiation, apoptosis, metabolism and immune regulation. This Drosophila melanogaster (Fruit fly) protein is CTTNBP2 N-terminal-like protein.